The sequence spans 207 residues: LexA repressor (207 aa).

A DNA-binding region (H-T-H motif) is located at residues 28–48 (VREIGEAVGLASSSTVHGHLA). Active-site for autocatalytic cleavage activity residues include Ser129 and Lys167.

Belongs to the peptidase S24 family. In terms of assembly, homodimer.

The enzyme catalyses Hydrolysis of Ala-|-Gly bond in repressor LexA.. In terms of biological role, represses a number of genes involved in the response to DNA damage (SOS response), including recA and lexA. In the presence of single-stranded DNA, RecA interacts with LexA causing an autocatalytic cleavage which disrupts the DNA-binding part of LexA, leading to derepression of the SOS regulon and eventually DNA repair. This chain is LexA repressor, found in Geobacillus sp. (strain WCH70).